Here is a 376-residue protein sequence, read N- to C-terminus: N-acetyldiaminopimelate deacetylase (376 aa).

Residue Asp69 is part of the active site. Glu128 serves as the catalytic Proton acceptor.

It belongs to the peptidase M20A family. N-acetyldiaminopimelate deacetylase subfamily.

The catalysed reaction is N-acetyl-(2S,6S)-2,6-diaminopimelate + H2O = (2S,6S)-2,6-diaminopimelate + acetate. The protein operates within amino-acid biosynthesis; L-lysine biosynthesis via DAP pathway; LL-2,6-diaminopimelate from (S)-tetrahydrodipicolinate (acetylase route): step 3/3. Its function is as follows. Catalyzes the conversion of N-acetyl-diaminopimelate to diaminopimelate and acetate. In Streptococcus pneumoniae (strain 70585), this protein is N-acetyldiaminopimelate deacetylase.